A 135-amino-acid chain; its full sequence is Flagellar assembly factor FliW 1 (135 aa).

It belongs to the FliW family. As to quaternary structure, interacts with translational regulator CsrA and flagellin(s).

It is found in the cytoplasm. Acts as an anti-CsrA protein, binds CsrA and prevents it from repressing translation of its target genes, one of which is flagellin. Binds to flagellin and participates in the assembly of the flagellum. The sequence is that of Flagellar assembly factor FliW 1 from Helicobacter pylori (strain HPAG1).